The sequence spans 391 residues: Protein CAJ1 (391 aa).

In terms of domain architecture, J spans 4 to 73; it reads ETEYYDILGI…RSKYDQFGKE (70 aa). Positions 119–161 are disordered; the sequence is KEDEEGTAATETEKADESTDGGMVKHDTNKAESLKKDKLSKEQ. The segment covering 129–161 has biased composition (basic and acidic residues); sequence ETEKADESTDGGMVKHDTNKAESLKKDKLSKEQ. Lys-132 participates in a covalent cross-link: Glycyl lysine isopeptide (Lys-Gly) (interchain with G-Cter in ubiquitin).

The chain is Protein CAJ1 (CAJ1) from Saccharomyces cerevisiae (strain ATCC 204508 / S288c) (Baker's yeast).